The following is a 199-amino-acid chain: Thioredoxin reductase-like selenoprotein T (199 aa).

The N-terminal stretch at 1-24 is a signal peptide; it reads MRAAGLGLGIGLLLLAALAGPGGS. A cross-link (cysteinyl-selenocysteine (Cys-Sec)) is located at residues 50–53; that stretch reads CVSU. A non-standard amino acid (selenocysteine) is located at residue Sec53. Residues 95–115 form a helical membrane-spanning segment; sequence VFKLVLIGLIIVGKDPFAFFG.

The protein belongs to the SelWTH family. Selenoprotein T subfamily. May contain a selenide-sulfide bond between Cys-50 and Sec-53. This bond is speculated to serve as redox-active pair.

The protein localises to the endoplasmic reticulum membrane. It catalyses the reaction [thioredoxin]-dithiol + NADP(+) = [thioredoxin]-disulfide + NADPH + H(+). Functionally, selenoprotein with thioredoxin reductase-like oxidoreductase activity. In Gallus gallus (Chicken), this protein is Thioredoxin reductase-like selenoprotein T.